The primary structure comprises 310 residues: tRNA dimethylallyltransferase (310 aa).

An ATP-binding site is contributed by 10-17; sequence GPTAVGKS. A substrate-binding site is contributed by 12-17; that stretch reads TAVGKS. Residues 35–38 form an interaction with substrate tRNA region; that stretch reads DSMQ.

The protein belongs to the IPP transferase family. As to quaternary structure, monomer. The cofactor is Mg(2+).

The catalysed reaction is adenosine(37) in tRNA + dimethylallyl diphosphate = N(6)-dimethylallyladenosine(37) in tRNA + diphosphate. Functionally, catalyzes the transfer of a dimethylallyl group onto the adenine at position 37 in tRNAs that read codons beginning with uridine, leading to the formation of N6-(dimethylallyl)adenosine (i(6)A). The protein is tRNA dimethylallyltransferase of Clostridium perfringens (strain 13 / Type A).